We begin with the raw amino-acid sequence, 1056 residues long: Ribosomal protein S6 kinase delta-1 (1056 aa).

Residues 8–132 enclose the PX domain; it reads SADLARFYTV…DFFKGGVISD (125 aa). Residues 204–223 form a disordered region; it reads VGAVASDSEPSRVEDRESRS. Over residues 212–222 the composition is skewed to basic and acidic residues; the sequence is EPSRVEDRESR. The MIT domain occupies 276 to 304; the sequence is VQGESSPTRREAVKRRTAEYLMRAESICS. 7 positions are modified to phosphoserine: serine 281, serine 422, serine 423, serine 426, serine 446, serine 448, and serine 454. A Protein kinase 1 domain is found at 343-444; the sequence is GVIDKVLLVM…SMPPRVCLQQ (102 aa). Residues 426-504 form a disordered region; the sequence is SLDIKEGRPS…KWLDSGSSSE (79 aa). Over residues 443 to 454 the composition is skewed to low complexity; that stretch reads QQPSASPQGGSS. Residues 473 to 482 are compositionally biased toward polar residues; sequence TSLTPSSQDD. Serine 493 and serine 527 each carry phosphoserine. A disordered region spans residues 529–588; sequence SEESVMQPEGDKADTQAVSSPASLATGSVSPSTHLRVFSGGEDLEAVSSPPTSESLSRSK. Residues 544 to 561 are compositionally biased toward polar residues; it reads QAVSSPASLATGSVSPST. Positions 576–587 are enriched in low complexity; it reads SSPPTSESLSRS. Phosphoserine occurs at positions 577, 599, 602, 634, 655, 658, 661, and 787. The disordered stretch occupies residues 628-662; sequence TLEDGDSPSQSLDPGESKRESEAQDSVSRGSDDSV. Residues 789–1046 enclose the Protein kinase 2 domain; that stretch reads RSESDRLGQV…VEDIKSHPFF (258 aa). ATP-binding positions include 795-803 and lysine 823; that span reads LGQVEVVVT. Residue aspartate 919 is the Proton acceptor of the active site.

It belongs to the protein kinase superfamily. Ser/Thr protein kinase family. S6 kinase subfamily. In terms of assembly, interacts with SPHK1 and phosphatidylinositol 3-phosphate. Interacts (via PX domain) with PRDX3.

The protein localises to the cytoplasm. Its subcellular location is the membrane. The protein resides in the early endosome. The enzyme catalyses L-seryl-[protein] + ATP = O-phospho-L-seryl-[protein] + ADP + H(+). The catalysed reaction is L-threonyl-[protein] + ATP = O-phospho-L-threonyl-[protein] + ADP + H(+). In terms of biological role, may be involved in transmitting sphingosine-1 phosphate (SPP)-mediated signaling into the cell. Plays a role in the recruitment of PRDX3 to early endosomes. The sequence is that of Ribosomal protein S6 kinase delta-1 (Rps6kc1) from Mus musculus (Mouse).